The primary structure comprises 131 residues: Aspartate 1-decarboxylase (131 aa).

The Schiff-base intermediate with substrate; via pyruvic acid role is filled by S25. The residue at position 25 (S25) is a Pyruvic acid (Ser). T57 is a binding site for substrate. Y58 (proton donor) is an active-site residue. A substrate-binding site is contributed by 73-75; that stretch reads GAA.

Belongs to the PanD family. Heterooctamer of four alpha and four beta subunits. It depends on pyruvate as a cofactor. Is synthesized initially as an inactive proenzyme, which is activated by self-cleavage at a specific serine bond to produce a beta-subunit with a hydroxyl group at its C-terminus and an alpha-subunit with a pyruvoyl group at its N-terminus.

It localises to the cytoplasm. The enzyme catalyses L-aspartate + H(+) = beta-alanine + CO2. It functions in the pathway cofactor biosynthesis; (R)-pantothenate biosynthesis; beta-alanine from L-aspartate: step 1/1. Functionally, catalyzes the pyruvoyl-dependent decarboxylation of aspartate to produce beta-alanine. This chain is Aspartate 1-decarboxylase, found in Anaeromyxobacter sp. (strain Fw109-5).